The sequence spans 465 residues: Ribulose bisphosphate carboxylase large chain (465 aa).

Residue lysine 4 is modified to N6,N6,N6-trimethyllysine. Substrate contacts are provided by asparagine 113 and threonine 163. Lysine 165 serves as the catalytic Proton acceptor. Residue lysine 167 coordinates substrate. The Mg(2+) site is built by lysine 191, aspartate 193, and glutamate 194. An N6-carboxylysine modification is found at lysine 191. The Proton acceptor role is filled by histidine 284. Residues arginine 285, histidine 317, and serine 369 each contribute to the substrate site.

This sequence belongs to the RuBisCO large chain family. Type I subfamily. As to quaternary structure, heterohexadecamer of 8 large chains and 8 small chains; disulfide-linked. The disulfide link is formed within the large subunit homodimers. It depends on Mg(2+) as a cofactor. In terms of processing, the disulfide bond which can form in the large chain dimeric partners within the hexadecamer appears to be associated with oxidative stress and protein turnover.

The protein resides in the plastid. Its subcellular location is the chloroplast. The catalysed reaction is 2 (2R)-3-phosphoglycerate + 2 H(+) = D-ribulose 1,5-bisphosphate + CO2 + H2O. The enzyme catalyses D-ribulose 1,5-bisphosphate + O2 = 2-phosphoglycolate + (2R)-3-phosphoglycerate + 2 H(+). In terms of biological role, ruBisCO catalyzes two reactions: the carboxylation of D-ribulose 1,5-bisphosphate, the primary event in carbon dioxide fixation, as well as the oxidative fragmentation of the pentose substrate in the photorespiration process. Both reactions occur simultaneously and in competition at the same active site. This is Ribulose bisphosphate carboxylase large chain from Cassia fistula (Golden shower tree).